A 241-amino-acid polypeptide reads, in one-letter code: 3-oxoacyl-[acyl-carrier-protein] reductase FabG (241 aa).

NADP(+)-binding positions include 13–16, serine 38, 57–58, and asparagine 83; these read GASG and EV. Substrate is bound at residue serine 135. Residue tyrosine 148 is the Proton acceptor of the active site. NADP(+) is bound by residues 148 to 152 and isoleucine 181; that span reads YCASK.

Belongs to the short-chain dehydrogenases/reductases (SDR) family. Homotetramer.

The enzyme catalyses a (3R)-hydroxyacyl-[ACP] + NADP(+) = a 3-oxoacyl-[ACP] + NADPH + H(+). The protein operates within lipid metabolism; fatty acid biosynthesis. Catalyzes the NADPH-dependent reduction of beta-ketoacyl-ACP substrates to beta-hydroxyacyl-ACP products, the first reductive step in the elongation cycle of fatty acid biosynthesis. The protein is 3-oxoacyl-[acyl-carrier-protein] reductase FabG (fabG) of Rickettsia conorii (strain ATCC VR-613 / Malish 7).